Here is a 980-residue protein sequence, read N- to C-terminus: Chitin binding domain containing chtb-2 (980 aa).

The N-terminal stretch at 1–20 (MRTMHCFLFILLFCLGQVFT) is a signal peptide. Asn187 and Asn190 each carry an N-linked (GlcNAc...) asparagine glycan. 3 disordered regions span residues 310–354 (ERQQ…AELD), 431–451 (QEEE…QIRQ), and 486–512 (EILR…QQEA). Asn941 and Asn975 each carry an N-linked (GlcNAc...) asparagine glycan.

The sequence is that of Chitin binding domain containing chtb-2 from Caenorhabditis elegans.